A 411-amino-acid polypeptide reads, in one-letter code: 2,3-bisphosphoglycerate-independent phosphoglycerate mutase (411 aa).

This sequence belongs to the BPG-independent phosphoglycerate mutase family. A-PGAM subfamily.

The enzyme catalyses (2R)-2-phosphoglycerate = (2R)-3-phosphoglycerate. The protein operates within carbohydrate degradation; glycolysis; pyruvate from D-glyceraldehyde 3-phosphate: step 3/5. Functionally, catalyzes the interconversion of 2-phosphoglycerate and 3-phosphoglycerate. This Pyrobaculum aerophilum (strain ATCC 51768 / DSM 7523 / JCM 9630 / CIP 104966 / NBRC 100827 / IM2) protein is 2,3-bisphosphoglycerate-independent phosphoglycerate mutase.